A 102-amino-acid chain; its full sequence is MGKAVNIEHVEERVESELMPPPMYKVILNNDDYTPMDFVIEVLQLFFKKNEQDATDIMLAIHNQGKGICGVFPFGIAETKVAQVNQFARQNQHPLLCSLEKA.

The protein belongs to the ClpS family. As to quaternary structure, binds to the N-terminal domain of the chaperone ClpA.

Involved in the modulation of the specificity of the ClpAP-mediated ATP-dependent protein degradation. This chain is ATP-dependent Clp protease adapter protein ClpS, found in Shewanella sediminis (strain HAW-EB3).